The chain runs to 802 residues: Oligophrenin-1 (802 aa).

Positions 265-368 (QPTIEGYLYT…WMEAMDGKEP (104 aa)) constitute a PH domain. The region spanning 380–564 (MELNEVGFKF…ILIEHFGKIY (185 aa)) is the Rho-GAP domain. Disordered regions lie at residues 569–589 (EESAAPPVPPPRVTARRHKPI), 607–770 (LDES…NAGE), and 783–802 (FETASRKTGSSQGRLPGDES). Over residues 616 to 627 (HQTPNGTITSSI) the composition is skewed to polar residues. The span at 716-732 (HHKEGDADSFSKVRPPG) shows a compositional bias: basic and acidic residues.

As to quaternary structure, interacts with HOMER1. Interacts with AMPA receptor complexes. Interacts with SH3GL2 (endophilin-A1). Interacts (via C-terminus) with NR1D1.

The protein localises to the postsynapse. The protein resides in the presynapse. It is found in the cell projection. It localises to the axon. Its subcellular location is the dendritic spine. The protein localises to the dendrite. The protein resides in the cytoplasm. Its function is as follows. Stimulates GTP hydrolysis of members of the Rho family. Its action on RHOA activity and signaling is implicated in growth and stabilization of dendritic spines, and therefore in synaptic function. Critical for the stabilization of AMPA receptors at postsynaptic sites. Critical for the regulation of synaptic vesicle endocytosis at pre-synaptic terminals. Required for the localization of NR1D1 to dendrites, can suppress its repressor activity and protect it from proteasomal degradation. The protein is Oligophrenin-1 (OPHN1) of Pan troglodytes (Chimpanzee).